Consider the following 219-residue polypeptide: Formate dehydrogenase 2 subunit beta (cytochrome c-553) (219 aa).

A 4Fe-4S ferredoxin-type 1 domain is found at lysine 3 to valine 32. Positions 12, 15, 18, 22, 74, 77, 82, 124, 141, 144, 156, and 160 each coordinate [4Fe-4S] cluster. The 4Fe-4S ferredoxin-type 2 domain maps to aspartate 132–aspartate 171.

As to quaternary structure, heterotrimer of cytochrome c3 FDH2C and formate dehydrogenase FDH2 alpha and beta subunits that forms the FdhABC(3) complex. It depends on [4Fe-4S] cluster as a cofactor.

Its subcellular location is the periplasm. In terms of biological role, beta chain of the formate dehydrogenase (FDH) that catalyzes the reversible two-electron oxidation of formate to carbon dioxide. The beta chain is an electron transfer unit. The polypeptide is Formate dehydrogenase 2 subunit beta (cytochrome c-553) (Nitratidesulfovibrio vulgaris (strain ATCC 29579 / DSM 644 / CCUG 34227 / NCIMB 8303 / VKM B-1760 / Hildenborough) (Desulfovibrio vulgaris)).